The following is a 264-amino-acid chain: Diphthine synthase (264 aa).

Residues Leu10, Asp87, Val90, 115–116 (SI), Leu166, Ala209, and His234 contribute to the S-adenosyl-L-methionine site.

Belongs to the diphthine synthase family. Homodimer.

The catalysed reaction is 2-[(3S)-amino-3-carboxypropyl]-L-histidyl-[translation elongation factor 2] + 3 S-adenosyl-L-methionine = diphthine-[translation elongation factor 2] + 3 S-adenosyl-L-homocysteine + 3 H(+). Its pathway is protein modification; peptidyl-diphthamide biosynthesis. In terms of biological role, S-adenosyl-L-methionine-dependent methyltransferase that catalyzes the trimethylation of the amino group of the modified target histidine residue in translation elongation factor 2 (EF-2), to form an intermediate called diphthine. The three successive methylation reactions represent the second step of diphthamide biosynthesis. The polypeptide is Diphthine synthase (Thermococcus onnurineus (strain NA1)).